A 464-amino-acid chain; its full sequence is Mothers against decapentaplegic homolog 5 (464 aa).

The MH1 domain maps to Pro-13–Pro-137. Zn(2+)-binding residues include Cys-65, Cys-110, Cys-122, and His-127. The interval His-166–Asp-258 is disordered. Positions Phe-173 to Gly-183 are enriched in polar residues. Residues Ala-199–Pro-216 are compositionally biased toward low complexity. Polar residues predominate over residues Gln-237–Pro-251. The MH2 domain occupies Trp-270–Ser-464.

It belongs to the dwarfin/SMAD family. May form trimers with the co-SMAD SMAD4.

It is found in the cytoplasm. The protein localises to the nucleus. Involved in ventralization. May mediate Bmp2b signaling during early phases of embryonic dorsal-ventral pattern formation. Required for initiation of Smad1 expression during gastrulation. This Danio rerio (Zebrafish) protein is Mothers against decapentaplegic homolog 5 (smad5).